Consider the following 96-residue polypeptide: Large ribosomal subunit protein eL43 (96 aa).

A C4-type zinc finger spans residues 39-60; it reads CTFCGKTATKRTCVGIWKCKKC.

The protein belongs to the eukaryotic ribosomal protein eL43 family. Component of the large ribosomal subunit. Mature ribosomes consist of a small (40S) and a large (60S) subunit. The 40S subunit contains about 32 different proteins and 1 molecule of RNA (18S). The 60S subunit contains about 42 different proteins and 3 molecules of RNA (28S, 5.8S and 5S).

It is found in the cytoplasm. Functionally, component of the ribosome, a large ribonucleoprotein complex responsible for the synthesis of proteins in the cell. The small ribosomal subunit (SSU) binds messenger RNAs (mRNAs) and translates the encoded message by selecting cognate aminoacyl-transfer RNA (tRNA) molecules. The large subunit (LSU) contains the ribosomal catalytic site termed the peptidyl transferase center (PTC), which catalyzes the formation of peptide bonds, thereby polymerizing the amino acids delivered by tRNAs into a polypeptide chain. The nascent polypeptides leave the ribosome through a tunnel in the LSU and interact with protein factors that function in enzymatic processing, targeting, and the membrane insertion of nascent chains at the exit of the ribosomal tunnel. This chain is Large ribosomal subunit protein eL43, found in Plasmodium falciparum (isolate 3D7).